Reading from the N-terminus, the 103-residue chain is Methanol dehydrogenase [cytochrome c] subunit 2 (103 aa).

The signal sequence occupies residues 1–20 (MKRILTLTVAALALGTPALA). Cysteines 26 and 32 form a disulfide.

Belongs to the methanol dehydrogenase subunit 2 family. As to quaternary structure, heterotetramer composed of 2 alpha and 2 beta subunits.

It is found in the periplasm. The catalysed reaction is 2 Fe(III)-[cytochrome cL] + a primary alcohol = 2 Fe(II)-[cytochrome cL] + an aldehyde + 2 H(+). In terms of biological role, catalyzes the oxidation of primary alcohols including methanol. The sequence is that of Methanol dehydrogenase [cytochrome c] subunit 2 (moxI) from Paracoccus denitrificans.